The chain runs to 408 residues: Aminopeptidase T (408 aa).

Residues glutamate 250, glutamate 316, glutamate 340, histidine 345, histidine 376, and aspartate 378 each coordinate a divalent metal cation.

Belongs to the peptidase M29 family. As to quaternary structure, homodimer. The cofactor is Co(2+). Requires Zn(2+) as cofactor. Mg(2+) is required as a cofactor.

Metal-dependent exopeptidase. This is Aminopeptidase T from Thermus thermophilus (strain ATCC 27634 / DSM 579 / HB8).